Here is a 1178-residue protein sequence, read N- to C-terminus: Niemann-Pick type C1-related protein (1178 aa).

N-linked (GlcNAc...) asparagine glycosylation occurs at Asn-41. 2 helical membrane-spanning segments follow: residues 157-177 (PWLF…GIFL) and 412-432 (VVEW…TSVV). Residues 414-570 (EWLRLCAAVL…LTFFLAGLSL (157 aa)) enclose the SSD domain. Asn-433 carries N-linked (GlcNAc...) asparagine glycosylation. Transmembrane regions (helical) follow at residues 448 to 468 (GALA…LCGV), 478 to 498 (PFLA…AYSL), 516 to 536 (AGLS…IGAL), and 545 to 565 (FCII…TFFL). Asn-621 carries N-linked (GlcNAc...) asparagine glycosylation. The helical transmembrane segment at 789-809 (ATVLVIFAAVTALAIYGATTL) threads the bilayer. N-linked (GlcNAc...) asparagine glycans are attached at residues Asn-917 and Asn-943. Helical transmembrane passes span 986–1006 (FTLT…LLLI), 1013–1033 (IIVV…MALI), 1037–1057 (LSMI…DFTI), 1080–1100 (IVMG…ILAL), and 1114–1134 (MMFM…PVVL).

The protein belongs to the patched family.

It localises to the inner membrane complex. The enzyme catalyses cholesterol(in) = cholesterol(out). Functionally, likely facilitates the efflux of cholesterol and gangliosides from membranes. Plays a role in the regulation of lipid homeostasis. The polypeptide is Niemann-Pick type C1-related protein (Toxoplasma gondii (strain ATCC 50611 / Me49)).